A 550-amino-acid polypeptide reads, in one-letter code: Formate--tetrahydrofolate ligase (550 aa).

60–67 (TPFGEGKT) is an ATP binding site.

The protein belongs to the formate--tetrahydrofolate ligase family.

It carries out the reaction (6S)-5,6,7,8-tetrahydrofolate + formate + ATP = (6R)-10-formyltetrahydrofolate + ADP + phosphate. It participates in one-carbon metabolism; tetrahydrofolate interconversion. The sequence is that of Formate--tetrahydrofolate ligase from Campylobacter curvus (strain 525.92).